Reading from the N-terminus, the 514-residue chain is Maturase K (514 aa).

The protein belongs to the intron maturase 2 family. MatK subfamily.

Its subcellular location is the plastid. It is found in the chloroplast. In terms of biological role, usually encoded in the trnK tRNA gene intron. Probably assists in splicing its own and other chloroplast group II introns. The protein is Maturase K of Drosophyllum lusitanicum (Portuguese sundew).